Reading from the N-terminus, the 405-residue chain is Type II secretion system protein F (405 aa).

At M1 to Q168 the chain is on the cytoplasmic side. Ca(2+)-binding residues include T97, E151, and D155. A helical transmembrane segment spans residues L169–L189. The Periplasmic segment spans residues G190–D219. A helical membrane pass occupies residues W220–F239. The Cytoplasmic segment spans residues R240–P376. A helical transmembrane segment spans residues F377 to I397. Topologically, residues L398 to G405 are periplasmic.

This sequence belongs to the GSP F family. As to quaternary structure, type II secretion system is composed of four main components: the outer membrane complex, the inner membrane complex, the cytoplasmic secretion ATPase and the periplasm-spanning pseudopilus. Homodimer. Interacts with XcpR/GspE and XcpY/GspL components.

The protein localises to the cell inner membrane. Component of the type II secretion system inner membrane complex required for the energy-dependent secretion of extracellular factors such as proteases and toxins from the periplasm. The chain is Type II secretion system protein F (xcpS) from Pseudomonas aeruginosa (strain ATCC 15692 / DSM 22644 / CIP 104116 / JCM 14847 / LMG 12228 / 1C / PRS 101 / PAO1).